Here is a 355-residue protein sequence, read N- to C-terminus: MNQVRKWNIIGGRVIKTGIAVFLTVLVCEFFNIPTIFAVITAIVTIEPTATDSIKKGLVRFPASTIGSAYAMTFTFFLGHQALSYALAAMFTIVTCQKLRLHAGTLVATLTAVAMIPITADHYFTAFLIRLATTSTGIIVSTVVNFFILPPHYVKTISGCTEELFVKTANVMEEWLTALMDGKVIKKETTYNLSKLTVLLHKAVQFVQYEQKDWKYHRHTKKEMRSFLLVQKQLHLLQQIIYHIDNLARAPIETCDWSQNEKEILRRTIHSIISILRNYCEKIDEEHFKLIDELDKQFWTNKNDLAHCKPNQYHHHFSSESIILFEVLSIHDMLEELKQIFEKYESENQLNCSVH.

4 helical membrane passes run 19 to 39 (IAVF…IFAV), 74 to 94 (FTFF…FTIV), 109 to 129 (TLTA…AFLI), and 131 to 151 (LATT…ILPP).

Belongs to the UPF0421 family.

The protein localises to the cell membrane. The polypeptide is UPF0421 protein BALH_2468 (Bacillus thuringiensis (strain Al Hakam)).